The primary structure comprises 193 residues: Transforming protein RhoA (193 aa).

GTP-binding positions include 12 to 19 (GDGACGKT) and 30 to 37 (FPEVYVPT). Positions 34–42 (YVPTVFENY) match the Effector region motif. A (Microbial infection) ADP-ribosylasparagine; by botulinum toxin modification is found at Asn41. Residues 59–63 (DTAGQ) and 117–120 (NKKD) each bind GTP. The interval 61–78 (AGQEDYDRLRPLSYPDTD) is switch II region; involved in RAP1GDS1 isoform 2 binding. At Gln63 the chain carries 5-glutamyl serotonin. Lys135 is covalently cross-linked (Glycyl lysine isopeptide (Lys-Gly) (interchain with G-Cter in ubiquitin)). 160 to 162 (SAK) lines the GTP pocket. Ser188 bears the Phosphoserine; by PKG/PRKG1 mark. Position 190 is a cysteine methyl ester (Cys190). Cys190 is lipidated: S-geranylgeranyl cysteine. A propeptide spans 191-193 (LVL) (removed in mature form).

Belongs to the small GTPase superfamily. Rho family. In terms of assembly, interacts with ARHGEF28. Interacts (via GTP-bound form) with RIPOR1 (via N-terminus); this interaction links RHOA to STK24 and STK26 kinases. Interacts with RIPOR2 (via active GTP- or inactive GDP-bound forms) isoform 1 and isoform 2; these interactions are direct, block the loading of GTP to RHOA and decrease upon chemokine CCL19 stimulation in primary T lymphocytes. Binds PRKCL1, ROCK1 and ROCK2. Interacts with ARHGEF2, ARHGEF3, NET1 and RTKN. Interacts with PLCE1 and AKAP13. Interacts with DIAPH1. Interacts (in the constitutively activated, GTP-bound form) with DGKQ. Interacts with RACK1; enhances RHOA activation. Interacts with PKP4; the interaction is detected at the midbody. Interacts (GTP-bound form preferentially) with PKN2; the interaction stimulates autophosphorylation and phosphorylation of PKN2. Interacts with ARHGDIA; this interaction inactivates and stabilizes RHOA. Interacts with ARHGDIB. Interacts (GTP-bound form) with KCNA2 (via cytoplasmic N-terminal domain). Interacts (GTP-bound form) with ECT2; the interaction results in allosteric activation of ECT2. Interacts with RAP1GDS1; the interaction is direct and in a 1:1 stoichiometry. Mg(2+) serves as cofactor. In terms of processing, phosphorylation by PRKG1 at Ser-188 inactivates RHOA signaling. Phosphorylation by SLK at Ser-188 in response to AGTR2 activation. Post-translationally, ubiquitinated by the BCR(KCTD13) and BCR(TNFAIP1) E3 ubiquitin ligase complexes, leading to its degradation by the proteasome, thereby regulating the actin cytoskeleton and synaptic transmission in neurons. Ubiquitinated at Lys-135 in a FBXL19-mediated manner; leading to proteasomal degradation. Serotonylation of Gln-63 by TGM2 during activation and aggregation of platelets leads to constitutive activation of GTPase activity.

Its subcellular location is the cell membrane. The protein localises to the cytoplasm. It localises to the cytoskeleton. It is found in the cleavage furrow. The protein resides in the cell cortex. Its subcellular location is the midbody. The protein localises to the cell projection. It localises to the lamellipodium. It is found in the dendrite. The protein resides in the nucleus. It carries out the reaction GTP + H2O = GDP + phosphate + H(+). With respect to regulation, regulated by guanine nucleotide exchange factors (GEFs) which promote the exchange of bound GDP for free GTP, GTPase activating proteins (GAPs) which increase the GTP hydrolysis activity and GDP dissociation inhibitors which inhibit the dissociation of the nucleotide from the GTPase. Activated by GEFs such as ARHGEF2, ARHGEF3, ARHGEF28 and BCR. Inhibited by GAPs such as ARHGAP30. Inhibited by GDP dissociation inhibitors such as ARHGDIA. In terms of biological role, small GTPase which cycles between an active GTP-bound and an inactive GDP-bound state. Mainly associated with cytoskeleton organization, in active state binds to a variety of effector proteins to regulate cellular responses such as cytoskeletal dynamics, cell migration and cell cycle. Regulates a signal transduction pathway linking plasma membrane receptors to the assembly of focal adhesions and actin stress fibers. Involved in a microtubule-dependent signal that is required for the myosin contractile ring formation during cell cycle cytokinesis. Plays an essential role in cleavage furrow formation. Required for the apical junction formation of keratinocyte cell-cell adhesion. Essential for the SPATA13-mediated regulation of cell migration and adhesion assembly and disassembly. The MEMO1-RHOA-DIAPH1 signaling pathway plays an important role in ERBB2-dependent stabilization of microtubules at the cell cortex. It controls the localization of APC and CLASP2 to the cell membrane, via the regulation of GSK3B activity. In turn, membrane-bound APC allows the localization of the MACF1 to the cell membrane, which is required for microtubule capture and stabilization. Regulates KCNA2 potassium channel activity by reducing its location at the cell surface in response to CHRM1 activation; promotes KCNA2 endocytosis. Acts as an allosteric activator of guanine nucleotide exchange factor ECT2 by binding in its activated GTP-bound form to the PH domain of ECT2 which stimulates the release of PH inhibition and promotes the binding of substrate RHOA to the ECT2 catalytic center. May be an activator of PLCE1. In neurons, involved in the inhibition of the initial spine growth. Upon activation by CaMKII, modulates dendritic spine structural plasticity by relaying CaMKII transient activation to synapse-specific, long-term signaling. Acts as a regulator of platelet alpha-granule release during activation and aggregation of platelets. When activated by DAAM1 may signal centrosome maturation and chromosomal segregation during cell division. May also be involved in contractile ring formation during cytokinesis. This is Transforming protein RhoA (RHOA) from Bos taurus (Bovine).